The chain runs to 256 residues: uncharacterized protein (256 aa).

A run of 7 helical transmembrane segments spans residues 32 to 52 (ILASIFIGFGITAASKTGSYF), 59 to 79 (FAFPAAAVTFGAAILMIAYGG), 112 to 132 (YAGNLIGAILFAILISATGLF), 156 to 176 (LFFRGMLCNWLVCLAFFIPMS), 184 to 204 (LFTMMLFVFCFFISGFEHSIA), 207 to 227 (CTFAISLLIEHPDTVTLMGAV), and 230 to 250 (LIPVTLGNLTAGIVMMGWMYY).

The protein belongs to the FNT transporter (TC 1.A.16) family.

The protein resides in the cell membrane. This is an uncharacterized protein from Bacillus subtilis (strain 168).